The primary structure comprises 506 residues: Maturase K (506 aa).

Belongs to the intron maturase 2 family. MatK subfamily.

It localises to the plastid. It is found in the chloroplast. In terms of biological role, usually encoded in the trnK tRNA gene intron. Probably assists in splicing its own and other chloroplast group II introns. The chain is Maturase K from Prunus dulcis (Almond).